We begin with the raw amino-acid sequence, 243 residues long: Anti-H(O) lectin 2 (243 aa).

A glycan (N-linked (GlcNAc...) asparagine) is linked at asparagine 115. Mn(2+) contacts are provided by glutamate 127 and aspartate 129. Residues aspartate 129, asparagine 136, and aspartate 139 each coordinate Ca(2+). Mn(2+) contacts are provided by aspartate 139 and histidine 144.

Belongs to the leguminous lectin family. As to quaternary structure, homodimer.

Functionally, lactose- or galactose-binding anti-H(O) lectin. This is Anti-H(O) lectin 2 from Cytisophyllum sessilifolium (Sessile-leaved cytisus).